The sequence spans 424 residues: STAM-binding protein (424 aa).

The tract at residues M1–K127 is interaction with CHMP3. Phosphoserine occurs at positions 2 and 48. The interaction with STAM stretch occupies residues P227–P231. Phosphoserine is present on S243. Residues I257–S388 form the MPN domain. Positions 335, 337, 348, 350, 390, 396, and 398 each coordinate Zn(2+). Positions H335 to D348 match the JAMM motif motif.

Belongs to the peptidase M67C family. Interacts with STAM. Interacts with SMAD6 and SMAD7. Interacts with CHMP3; the interaction appears to relieve the autoinhibition of CHMP3. Interacts with SMURF2 and RNF11; this interaction promotes ubiquitination. Zn(2+) is required as a cofactor. Post-translationally, phosphorylated after BMP type I receptor activation. In terms of processing, ubiquitinated by SMURF2 in the presence of RNF11.

It localises to the nucleus. Its subcellular location is the membrane. The protein resides in the cytoplasm. It is found in the early endosome. Inhibited by N-ethylmaleimide. Zinc metalloprotease that specifically cleaves 'Lys-63'-linked polyubiquitin chains. Does not cleave 'Lys-48'-linked polyubiquitin chains. Plays a role in signal transduction for cell growth and MYC induction mediated by IL-2 and GM-CSF. Potentiates BMP (bone morphogenetic protein) signaling by antagonizing the inhibitory action of SMAD6 and SMAD7. Has a key role in regulation of cell surface receptor-mediated endocytosis and ubiquitin-dependent sorting of receptors to lysosomes. Endosomal localization of STAMBP is required for efficient EGFR degradation but not for its internalization. Involved in the negative regulation of PI3K-AKT-mTOR and RAS-MAP signaling pathways. This is STAM-binding protein (Stambp) from Rattus norvegicus (Rat).